Reading from the N-terminus, the 125-residue chain is Large ribosomal subunit protein bL12 (125 aa).

The protein belongs to the bacterial ribosomal protein bL12 family. Homodimer. Part of the ribosomal stalk of the 50S ribosomal subunit. Forms a multimeric L10(L12)X complex, where L10 forms an elongated spine to which 2 to 4 L12 dimers bind in a sequential fashion. Binds GTP-bound translation factors.

Its function is as follows. Forms part of the ribosomal stalk which helps the ribosome interact with GTP-bound translation factors. Is thus essential for accurate translation. The sequence is that of Large ribosomal subunit protein bL12 from Nitrobacter winogradskyi (strain ATCC 25391 / DSM 10237 / CIP 104748 / NCIMB 11846 / Nb-255).